We begin with the raw amino-acid sequence, 395 residues long: General transcription factor IIH subunit 2 (395 aa).

A VWFA domain is found at histidine 60–valine 236. Tyrosine 95 bears the Phosphotyrosine mark. The C4-type zinc-finger motif lies at cysteine 291 to cysteine 308.

This sequence belongs to the GTF2H2 family. Component of the TFIID-containing RNA polymerase II pre-initiation complex that is composed of TBP and at least GTF2A1, GTF2A2, GTF2E1, GTF2E2, GTF2F1, GTF2H2, GTF2H3, GTF2H4, GTF2H5, GTF2B, TCEA1, ERCC2 and ERCC3. Component of the 7-subunit TFIIH core complex composed of XPB/ERCC3, XPD/ERCC2, GTF2H1, GTF2H2, GTF2H3, GTF2H4 and GTF2H5, which is active in NER. The core complex associates with the 3-subunit CDK-activating kinase (CAK) module composed of CCNH/cyclin H, CDK7 and MNAT1 to form the 10-subunit holoenzyme (holo-TFIIH) active in transcription. Interacts with XPB, XPD, GTF2H1 and GTF2H3. In terms of assembly, (Microbial infection) Interacts with varicella-zoster virus IE63 protein. As to expression, widely expressed, with higher expression in skeletal muscle.

It localises to the nucleus. Component of the general transcription and DNA repair factor IIH (TFIIH) core complex, which is involved in general and transcription-coupled nucleotide excision repair (NER) of damaged DNA and, when complexed to CAK, in RNA transcription by RNA polymerase II. In NER, TFIIH acts by opening DNA around the lesion to allow the excision of the damaged oligonucleotide and its replacement by a new DNA fragment. In transcription, TFIIH has an essential role in transcription initiation. When the pre-initiation complex (PIC) has been established, TFIIH is required for promoter opening and promoter escape. Phosphorylation of the C-terminal tail (CTD) of the largest subunit of RNA polymerase II by the kinase module CAK controls the initiation of transcription. The N-terminus of GTF2H2 interacts with and regulates XPD whereas an intact C-terminus is required for a successful escape of RNAP II form the promoter. The polypeptide is General transcription factor IIH subunit 2 (GTF2H2) (Homo sapiens (Human)).